The following is a 350-amino-acid chain: Protein RecA (350 aa).

ATP is bound at residue 67 to 74 (GPESSGKT).

It belongs to the RecA family.

The protein resides in the cytoplasm. Functionally, can catalyze the hydrolysis of ATP in the presence of single-stranded DNA, the ATP-dependent uptake of single-stranded DNA by duplex DNA, and the ATP-dependent hybridization of homologous single-stranded DNAs. It interacts with LexA causing its activation and leading to its autocatalytic cleavage. The sequence is that of Protein RecA from Mycobacterium avium (strain 104).